The chain runs to 678 residues: Catalase (678 aa).

A compositionally biased stretch (basic and acidic residues) spans 1 to 26 (MSNEREMQNKKDQQLESFRVEDEGKK). The segment at 1-32 (MSNEREMQNKKDQQLESFRVEDEGKKLTTNQG) is disordered. Residues His75 and Asn148 contribute to the active site. Tyr362 lines the heme pocket.

It belongs to the catalase family. HPII subfamily. Requires heme as cofactor.

It localises to the cytoplasm. The enzyme catalyses 2 H2O2 = O2 + 2 H2O. In terms of biological role, decomposes hydrogen peroxide into water and oxygen; serves to protect cells from the toxic effects of hydrogen peroxide. This is Catalase (katE) from Alkalihalophilus pseudofirmus (strain ATCC BAA-2126 / JCM 17055 / OF4) (Bacillus pseudofirmus).